Consider the following 1113-residue polypeptide: MGSRSFTRALALAFNEWLLMFMLFVNSIFSYVIARFADYSELQSPCLMCSNLDHILRRTKDLKKTHWDIICSKHKSEISSLVYCHAHGKLVDVRGMCETCLFSFATTNKSNAETYRLLVGKLGEDSHFGSKSDRSKYPNCSKLTDCTCCNQLWTPQTAATQVAEREILPKIGLLGKIRTGKQSAPKKSVSFNHLPDVGYTELKIHSDTESEAVFSDTEPKQESSLNHLPPVGYNEPKIGLVGDVRTGKPSTPKKSVSFNHLPDVGYTELKIHSDTESEAVFSEDECVVLKDEDHKYQIVDLQTHPIITLPYDLATDKLLNFDFPLEPFVTRNDREEVQLQETNWRTYSSFPVLIPVNDVPETSEKVFKEEEINSLDNLFLTSRAMKHFAAAKVKEEPIRLQDISSTPDVKENPANASLMEETELICLSDVTATSGAMEHSEVILKEREELIHLQDISVTPDFKENPANASLLEETELICLNDVTSPLRAVEHSAVLLKDKVEPIRLQDGGSLTPDFMENSANASILEETELICVNDVTSTSRTMGHSSVVLKENEEPIRFQDSSLTPDFKENPASTFLVEETELICLNDVTSPSRAMEHSTVFIEEKEELVRHQNITLTQDFMENPANSSLREETELICLNDVTSTSEVAETPEDVLEGIELMSIHDISLDEVSESVTTNQTSVEISKERDTDQADITSLESEYIVVPSPNSMPENSTDNCVSDKKEMKETSLRISSLSEMAPRDVTSHTEAALESESSSFNSMSVAAETNQYSGELLDLADAYNIVVGNEGHYDSNGRQQIENWMKKDTSRVSEDLKALLTQISASRGIEFLSPRDVSPKISVNSSDQETKNLDHDMQLLLQKRMLERNESNLSLEGVSVTEIEGESEGDRLKRQVDYDRKLLTGLYKELEEERSASAVATNQAMAMITRLQEEKASFQMEALQNLRMMEEQAEYDMEAIQRLNDLLVEREKLIQDLEAEIEYFRDQTPQKKNKLDVAEKVTEMDSPSEGMSNKIQSCLVGFDEERLYITSCLEKIENRVNGKAHDDNLPAQESVSELHERVERLKGDLYFLEQVMNSLGHGNEGVQFVKEIASHLQTLRSLSMKRQDQTEC.

The helical transmembrane segment at leucine 12–alanine 34 threads the bilayer. A disordered region spans residues glutamate 209–proline 229. One can recognise a GTD-binding domain in the interval serine 888 to arginine 986.

In terms of assembly, interacts with myosin XI-K, XI-I and XI-1. As to expression, expressed in leaf epidermal cells, roots and root hairs.

It localises to the endomembrane system. Membrane-anchored myosin receptors that define a distinct, plant-specific transport vesicle compartment. The chain is Myosin-binding protein 1 from Arabidopsis thaliana (Mouse-ear cress).